We begin with the raw amino-acid sequence, 1183 residues long: Atrophin-1 (1183 aa).

Disordered stretches follow at residues 1-603 (MKTR…ITTS), 617-760 (SPAG…ARFN), and 780-855 (LEGS…HRPP). The Nuclear localization signal signature appears at 16–32 (RKKEAPGPREELRSRGR). A compositionally biased stretch (basic and acidic residues) spans 17–29 (KKEAPGPREELRS). Ser-34 bears the Phosphoserine mark. Positions 45–63 (GKAEKSRQTAKKARVEETS) are enriched in basic and acidic residues. Phosphoserine is present on residues Ser-77, Ser-79, Ser-100, Ser-102, and Ser-106. Over residues 107-127 (LDGRSINDDGSSDPRDIDQDN) the composition is skewed to basic and acidic residues. Polar residues predominate over residues 128 to 151 (RSTSPSIYSPGSVENDSDSSSGLS). Composition is skewed to pro residues over residues 157 to 173 (PYHPPPLFPPSPPPPDS) and 207 to 218 (GPPPGAPPPHPQ). The segment covering 261 to 272 (IPISSSGASGAP) has biased composition (low complexity). The span at 344–373 (PPGPEKGPTLAPSPHPLPPASSSAPGPPMR) shows a compositional bias: pro residues. Low complexity predominate over residues 377 to 400 (SSCSSSSVAASSSSSAATSQYPAS). A compositionally biased stretch (polar residues) spans 415–436 (SMSVSNQPPKYTQPSLPSQAVW). The involved in binding BAIAP2 stretch occupies residues 510 to 560 (HPLESSNSHHAHPYNMSPSLGSLRPYPPGPAHLPPSHGQVSYSQAGPNGPP). Low complexity predominate over residues 562-584 (SSSSNSSGSSSQAAYSCSHPSSS). Ser-625 is modified (phosphoserine). N6-acetyllysine is present on Lys-634. Position 646 is a phosphothreonine (Thr-646). A Phosphoserine modification is found at Ser-654. The residue at position 662 (Thr-662) is a Phosphothreonine. Composition is skewed to pro residues over residues 701-711 (LPPPPAAPTTG) and 732-745 (SPVPPARSPSPPPK). The residue at position 732 (Ser-732) is a Phosphoserine; by MAPK8. A phosphoserine mark is found at Ser-739 and Ser-741. Basic and acidic residues predominate over residues 788-832 (KRADLVEKVRREAEQRAREEKEREREREREKEREREKERELERSV). The interval 872–887 (DTPALRTLSEYARPHV) is required for interaction with FAT1. Ser-889 is subject to Phosphoserine. Residues 921–940 (PAAREREREARERDLRDRLK) form a disordered region. Residues 922–940 (AAREREREARERDLRDRLK) show a composition bias toward basic and acidic residues. Positions 1026-1034 (ALGNDPLAR) match the Nuclear export signal motif. Position 1108 is an asymmetric dimethylarginine (Arg-1108). Lys-1176 participates in a covalent cross-link: Glycyl lysine isopeptide (Lys-Gly) (interchain with G-Cter in SUMO2).

In terms of assembly, interacts with NR2E1; the interaction represses the transcriptional activity of NR2E1. Interact (via its N-terminus) with FAT1 (via a C-terminal domain). Interacts with BAIAP2, WWP1, WWP2, WWP3 and RERE. Interacts (via its N-terminus) with MTG8; the interaction enhances transcriptional repression of MTG8. Interacts with PQBP1. Post-translationally, phosphorylated in vitro by MAPK8/JNK1 on Ser-732. In terms of tissue distribution, predominant neuronal expression, Expressed in most brain regions including striatum, hippocampus, cerebral cortex, diencephalon, brain stem and cerebellum. Highest levels in cerebellum. Also highly expressed in kidney and testis, low expression in skeletal muscle and heart.

It is found in the nucleus. The protein localises to the cytoplasm. Its subcellular location is the perinuclear region. The protein resides in the cell junction. In terms of biological role, transcriptional corepressor. Recruits NR2E1 to repress transcription. Promotes vascular smooth cell (VSMC) migration and orientation. Corepressor of MTG8 transcriptional repression. Has some intrinsic repression activity. The polypeptide is Atrophin-1 (Atn1) (Rattus norvegicus (Rat)).